Reading from the N-terminus, the 133-residue chain is CDGSH iron-sulfur domain protein (133 aa).

Residues 1–35 (MEPISHLVKSSLPNYLSSLPVPDSIGGWFKLSFKD) are Lumenal-facing. Residues 36–58 (WLALIPPTVVVAGLGYTAYLAYC) form a helical membrane-spanning segment. Over 59-133 (PAARASCAAK…DNVGPIVIKK (75 aa)) the chain is Cytoplasmic. Positions 100, 102, 111, and 115 each coordinate [2Fe-2S] cluster.

Belongs to the CISD protein family. CISD2 subfamily. The cofactor is [2Fe-2S] cluster.

The protein resides in the endoplasmic reticulum membrane. The polypeptide is CDGSH iron-sulfur domain protein (Drosophila melanogaster (Fruit fly)).